Consider the following 203-residue polypeptide: Holliday junction branch migration complex subunit RuvA (203 aa).

The segment at 1–64 (MIGRLRGIII…EDAQLLYGFN (64 aa)) is domain I. Residues 65-142 (NKQERTLFKE…KGLHGDLFTP (78 aa)) are domain II. The flexible linker stretch occupies residues 143-154 (AADLVLTSPASP). Positions 155–203 (ATDDAEQEAVAALVALGYKPQEASRMVSKIARPDASSETLIREALRAAL) are domain III.

Belongs to the RuvA family. In terms of assembly, homotetramer. Forms an RuvA(8)-RuvB(12)-Holliday junction (HJ) complex. HJ DNA is sandwiched between 2 RuvA tetramers; dsDNA enters through RuvA and exits via RuvB. An RuvB hexamer assembles on each DNA strand where it exits the tetramer. Each RuvB hexamer is contacted by two RuvA subunits (via domain III) on 2 adjacent RuvB subunits; this complex drives branch migration. In the full resolvosome a probable DNA-RuvA(4)-RuvB(12)-RuvC(2) complex forms which resolves the HJ.

The protein resides in the cytoplasm. In terms of biological role, the RuvA-RuvB-RuvC complex processes Holliday junction (HJ) DNA during genetic recombination and DNA repair, while the RuvA-RuvB complex plays an important role in the rescue of blocked DNA replication forks via replication fork reversal (RFR). RuvA specifically binds to HJ cruciform DNA, conferring on it an open structure. The RuvB hexamer acts as an ATP-dependent pump, pulling dsDNA into and through the RuvAB complex. HJ branch migration allows RuvC to scan DNA until it finds its consensus sequence, where it cleaves and resolves the cruciform DNA. This chain is Holliday junction branch migration complex subunit RuvA, found in Shigella boydii serotype 18 (strain CDC 3083-94 / BS512).